We begin with the raw amino-acid sequence, 413 residues long: 26S proteasome regulatory subunit 6B homolog (413 aa).

A disordered region spans residues 1-30 (MATAMVLDPKPAEKLPATRPETSITDVPSD). Residues 32-80 (EDDLYARLKSLQRQLEFIEIQEEYVKDELKNLRREHLRAQEEVKRIQSV) are a coiled coil. Residue 201–208 (GPPGTGKT) coordinates ATP.

It belongs to the AAA ATPase family.

It is found in the cytoplasm. It localises to the nucleus. In terms of biological role, the 26S proteasome is involved in the ATP-dependent degradation of ubiquitinated proteins. The regulatory (or ATPase) complex confers ATP dependency and substrate specificity to the 26S complex. This Solanum tuberosum (Potato) protein is 26S proteasome regulatory subunit 6B homolog.